The chain runs to 309 residues: Glutaminase (309 aa).

Substrate contacts are provided by Ser-64, Asn-114, Glu-160, Asn-167, Tyr-191, Tyr-243, and Val-261.

This sequence belongs to the glutaminase family. As to quaternary structure, homotetramer.

It catalyses the reaction L-glutamine + H2O = L-glutamate + NH4(+). This chain is Glutaminase, found in Methylorubrum extorquens (strain CM4 / NCIMB 13688) (Methylobacterium extorquens).